Consider the following 262-residue polypeptide: Putative protein-methionine-sulfoxide reductase subunit YedZ1 (262 aa).

The protein belongs to the MsrP family.

In terms of biological role, part of the YedY1-YedZ1 system that may repair oxidized proteins containing methionine sulfoxide residues (Met-O). This is Putative protein-methionine-sulfoxide reductase subunit YedZ1 from Azospira oryzae (strain ATCC BAA-33 / DSM 13638 / PS) (Dechlorosoma suillum).